The following is a 102-amino-acid chain: Large ribosomal subunit protein bL28 (102 aa).

The tract at residues 1 to 20 is disordered; the sequence is MSRRCELTAKGPQVGHKVSH.

Belongs to the bacterial ribosomal protein bL28 family.

This Bradyrhizobium sp. (strain ORS 278) protein is Large ribosomal subunit protein bL28.